Here is a 206-residue protein sequence, read N- to C-terminus: Outer-membrane lipoprotein carrier protein (206 aa).

An N-terminal signal peptide occupies residues 1-21 (MKKLLCAVLLSPLLYSNAVLA).

The protein belongs to the LolA family. Monomer.

Its subcellular location is the periplasm. Participates in the translocation of lipoproteins from the inner membrane to the outer membrane. Only forms a complex with a lipoprotein if the residue after the N-terminal Cys is not an aspartate (The Asp acts as a targeting signal to indicate that the lipoprotein should stay in the inner membrane). The sequence is that of Outer-membrane lipoprotein carrier protein from Shewanella sp. (strain MR-7).